The sequence spans 405 residues: Maintenance of mitochondrial morphology protein 1 (405 aa).

Over 1–86 the chain is Lumenal; sequence MQVLNFYVNP…TGSTKSFTQG (86 aa). The chain crosses the membrane as a helical span at residues 87–107; the sequence is LIIGQLSVIILLGIFIKFFVF. Over 108–405 the chain is Cytoplasmic; sequence ADSSTTSSTS…QPVSTTESDH (298 aa). An SMP-LTD domain is found at 166 to 385; that stretch reads APESLDWFNV…EPRFQVVKLP (220 aa). A disordered region spans residues 303-324; that stretch reads SEPRVAMDSPQSTRDDNSEEPN.

The protein belongs to the MMM1 family. As to quaternary structure, homodimer. Component of the ER-mitochondria encounter structure (ERMES) or MDM complex, composed of MMM1, MDM10, MDM12 and MDM34. An MMM1 homodimer associates with one molecule of MDM12 on each side in a pairwise head-to-tail manner, and the SMP-LTD domains of MMM1 and MDM12 generate a continuous hydrophobic tunnel for phospholipid trafficking.

It localises to the endoplasmic reticulum membrane. Its function is as follows. Component of the ERMES/MDM complex, which serves as a molecular tether to connect the endoplasmic reticulum (ER) and mitochondria. Components of this complex are involved in the control of mitochondrial shape and protein biogenesis, and function in nonvesicular lipid trafficking between the ER and mitochondria. The MDM12-MMM1 subcomplex functions in the major beta-barrel assembly pathway that is responsible for biogenesis of all outer membrane beta-barrel proteins, and acts in a late step after the SAM complex. The MDM10-MDM12-MMM1 subcomplex further acts in the TOM40-specific pathway after the action of the MDM12-MMM1 complex. Essential for establishing and maintaining the structure of mitochondria and maintenance of mtDNA nucleoids. This chain is Maintenance of mitochondrial morphology protein 1, found in Meyerozyma guilliermondii (strain ATCC 6260 / CBS 566 / DSM 6381 / JCM 1539 / NBRC 10279 / NRRL Y-324) (Yeast).